A 738-amino-acid polypeptide reads, in one-letter code: Catalase-peroxidase (738 aa).

A compositionally biased stretch (basic and acidic residues) spans 1-16 (MSENHDAIVTDAKTEE). The interval 1 to 37 (MSENHDAIVTDAKTEEAGGCPVAHGRAPHPTQGGGNR) is disordered. The segment at residues 108-231 (WHSAGTYRIS…LGAVQMGLIY (124 aa)) is a cross-link (tryptophyl-tyrosyl-methioninium (Trp-Tyr) (with M-257)). Residue histidine 109 is the Proton acceptor of the active site. The tryptophyl-tyrosyl-methioninium (Tyr-Met) (with W-108) cross-link spans 231–257 (YVNPEGPNGNPDPIAAARDIRETFGRM). Residue histidine 272 participates in heme b binding.

This sequence belongs to the peroxidase family. Peroxidase/catalase subfamily. In terms of assembly, homodimer or homotetramer. Requires heme b as cofactor. Post-translationally, formation of the three residue Trp-Tyr-Met cross-link is important for the catalase, but not the peroxidase activity of the enzyme.

It catalyses the reaction H2O2 + AH2 = A + 2 H2O. It carries out the reaction 2 H2O2 = O2 + 2 H2O. In terms of biological role, bifunctional enzyme with both catalase and broad-spectrum peroxidase activity. In Streptomyces ambofaciens, this protein is Catalase-peroxidase.